Here is a 99-residue protein sequence, read N- to C-terminus: Cell division protein FtsB (99 aa).

Over 1–3 the chain is Cytoplasmic; it reads MKF. The chain crosses the membrane as a helical span at residues 4–21; it reads FVIALIVLLGLLQYRLWS. Residues 22–99 are Periplasmic-facing; the sequence is GDNSLPEYFV…GDRSVSSPSQ (78 aa). The stretch at 31–73 forms a coiled coil; it reads VLQKQIAAQQDGNAKLNERNQVLKEEIIDLKSGTEAIEERARN.

Belongs to the FtsB family. As to quaternary structure, part of a complex composed of FtsB, FtsL and FtsQ.

It localises to the cell inner membrane. Its function is as follows. Essential cell division protein. May link together the upstream cell division proteins, which are predominantly cytoplasmic, with the downstream cell division proteins, which are predominantly periplasmic. The protein is Cell division protein FtsB of Shewanella sp. (strain MR-4).